A 130-amino-acid polypeptide reads, in one-letter code: Small ribosomal subunit protein uS9 (130 aa).

The protein belongs to the universal ribosomal protein uS9 family.

The sequence is that of Small ribosomal subunit protein uS9 from Desulfovibrio desulfuricans (strain ATCC 27774 / DSM 6949 / MB).